The primary structure comprises 107 residues: Replication initiation control protein YabA (107 aa).

4 residues coordinate Zn(2+): H80, C82, C97, and C100.

This sequence belongs to the YabA family. In terms of assembly, homotetramer. Interacts with both DnaA and DnaN, acting as a bridge between these two proteins. The cofactor is Zn(2+).

It is found in the cytoplasm. The protein localises to the nucleoid. Its function is as follows. Involved in control of chromosome replication initiation. Inhibits the cooperative binding of DnaA to the oriC region, thus negatively regulating initiation of chromosome replication. Inhibits the ability of DnaA-ATP to form a helix on DNA; does not disassemble preformed DnaA-DNA helices. Decreases the residence time of DnaA on the chromosome at its binding sites (oriC, replication forks and promoter-binding sites). Tethers DnaA to the replication machinery via the DNA polymerase beta sliding clamp subunit (dnaN). Associates with oriC and other DnaA targets on the chromosome in a DnaA-dependent manner. The protein is Replication initiation control protein YabA of Streptococcus gordonii (strain Challis / ATCC 35105 / BCRC 15272 / CH1 / DL1 / V288).